The primary structure comprises 335 residues: Glyceraldehyde-3-phosphate dehydrogenase (335 aa).

NAD(+)-binding positions include 12–13, D34, R78, and S120; that span reads RI. D-glyceraldehyde 3-phosphate is bound by residues 151 to 153 and T182; that span reads SCT. C152 (nucleophile) is an active-site residue. N183 provides a ligand contact to NAD(+). D-glyceraldehyde 3-phosphate contacts are provided by residues R197, 210–211, and R233; that span reads TG. Residue N315 coordinates NAD(+).

It belongs to the glyceraldehyde-3-phosphate dehydrogenase family. In terms of assembly, homotetramer.

Its subcellular location is the cytoplasm. The enzyme catalyses D-glyceraldehyde 3-phosphate + phosphate + NAD(+) = (2R)-3-phospho-glyceroyl phosphate + NADH + H(+). It functions in the pathway carbohydrate degradation; glycolysis; pyruvate from D-glyceraldehyde 3-phosphate: step 1/5. Catalyzes the oxidative phosphorylation of glyceraldehyde 3-phosphate (G3P) to 1,3-bisphosphoglycerate (BPG) using the cofactor NAD. The first reaction step involves the formation of a hemiacetal intermediate between G3P and a cysteine residue, and this hemiacetal intermediate is then oxidized to a thioester, with concomitant reduction of NAD to NADH. The reduced NADH is then exchanged with the second NAD, and the thioester is attacked by a nucleophilic inorganic phosphate to produce BPG. The sequence is that of Glyceraldehyde-3-phosphate dehydrogenase (gap) from Priestia megaterium (strain DSM 319 / IMG 1521) (Bacillus megaterium).